Here is a 169-residue protein sequence, read N- to C-terminus: S-ribosylhomocysteine lyase (169 aa).

3 residues coordinate Fe cation: His-54, His-58, and Cys-128.

The protein belongs to the LuxS family. Homodimer. Fe cation serves as cofactor.

It catalyses the reaction S-(5-deoxy-D-ribos-5-yl)-L-homocysteine = (S)-4,5-dihydroxypentane-2,3-dione + L-homocysteine. In terms of biological role, involved in the synthesis of autoinducer 2 (AI-2) which is secreted by bacteria and is used to communicate both the cell density and the metabolic potential of the environment. The regulation of gene expression in response to changes in cell density is called quorum sensing. Catalyzes the transformation of S-ribosylhomocysteine (RHC) to homocysteine (HC) and 4,5-dihydroxy-2,3-pentadione (DPD). The chain is S-ribosylhomocysteine lyase from Shewanella woodyi (strain ATCC 51908 / MS32).